A 1794-amino-acid chain; its full sequence is Non-reducing polyketide synthase nscA (1794 aa).

The tract at residues 19–256 (DLKDLFRRLH…PLPVYDGLCH (238 aa)) is N-terminal acylcarrier protein transacylase domain (SAT). A Ketosynthase family 3 (KS3) domain is found at 389–822 (ASKLAIVGMA…GGNTTVLLED (434 aa)). The tract at residues 427-448 (PDRFDLNTHYDPTGKTENATQT) is disordered. Residues 428-440 (DRFDLNTHYDPTG) are compositionally biased toward basic and acidic residues. Active-site for beta-ketoacyl synthase activity residues include C562, H697, and H740. The malonyl-CoA:ACP transacylase (MAT) domain stretch occupies residues 928–1249 (FTGQGAYYSG…LVTLHLAGLT (322 aa)). A product template (PT) domain region spans residues 1314 to 1633 (TSLVHQITAE…RLLMDRFFSP (320 aa)). Residues 1318 to 1454 (HQITAETVEA…GVVRFEDPAA (137 aa)) form an N-terminal hotdog fold region. In terms of domain architecture, PKS/mFAS DH spans 1318 to 1628 (HQITAETVEA…FRRVPRLLMD (311 aa)). H1350 serves as the catalytic Proton acceptor; for dehydratase activity. A C-terminal hotdog fold region spans residues 1482–1628 (ASKLSKPLAY…FRRVPRLLMD (147 aa)). D1539 (proton donor; for dehydratase activity) is an active-site residue. 2 disordered regions span residues 1637 to 1665 (SHAE…EAPA) and 1682 to 1718 (ASKS…GDPV). Polar residues-rich tracts occupy residues 1644-1655 (QETAPSATSVKK) and 1685-1701 (SEVS…QESP). The Carrier domain maps to 1717-1794 (PVDAGVVGQC…EMTAWLEEYC (78 aa)). Position 1754 is an O-(pantetheine 4'-phosphoryl)serine (S1754).

It depends on pantetheine 4'-phosphate as a cofactor.

Its pathway is secondary metabolite biosynthesis. Its function is as follows. Non-reducing polyketide synthase; part of the gene cluster that mediates the biosynthesis of neosartoricin, a prenylated anthracenone that exhibits T-cell antiproliferative activity, suggestive of a physiological role as an immunosuppressive agent. The non-reducing polyketide synthase nscA probably synthesizes and cyclizes the decaketide backbone. The hydrolase nscB then mediates the product release through hydrolysis followed by spontaneous decarboxylation. The prenyltransferase nscD catalyzes the addition of the dimethylallyl group to the aromatic C5. The FAD-dependent monooxygenase nscC is then responsible for the stereospecific hydroxylation at C2. There is no gene encoding O-acetyltransferase in the nsc gene cluster; thus, the last step of 2-O-acetylation leading to neosartoricin may be catalyzed by an unidentified O-acetyltransferase. This Neosartorya fischeri (strain ATCC 1020 / DSM 3700 / CBS 544.65 / FGSC A1164 / JCM 1740 / NRRL 181 / WB 181) (Aspergillus fischerianus) protein is Non-reducing polyketide synthase nscA.